Consider the following 630-residue polypeptide: Phosphomethylpyrimidine synthase (630 aa).

2 disordered regions span residues 1–22 (MADIDSRLDTTQATPIGVTTGP) and 97–120 (AQREVRPEDNGQLGPDRSGGVPAF). Residues Asn-224, Met-253, Tyr-282, His-318, 338–340 (SRG), 379–382 (DGLR), and Glu-418 each bind substrate. His-422 serves as a coordination point for Zn(2+). Position 445 (Tyr-445) interacts with substrate. His-486 is a binding site for Zn(2+). [4Fe-4S] cluster contacts are provided by Cys-566, Cys-569, and Cys-574.

The protein belongs to the ThiC family. Homodimer. [4Fe-4S] cluster is required as a cofactor.

It carries out the reaction 5-amino-1-(5-phospho-beta-D-ribosyl)imidazole + S-adenosyl-L-methionine = 4-amino-2-methyl-5-(phosphooxymethyl)pyrimidine + CO + 5'-deoxyadenosine + formate + L-methionine + 3 H(+). It participates in cofactor biosynthesis; thiamine diphosphate biosynthesis. In terms of biological role, catalyzes the synthesis of the hydroxymethylpyrimidine phosphate (HMP-P) moiety of thiamine from aminoimidazole ribotide (AIR) in a radical S-adenosyl-L-methionine (SAM)-dependent reaction. The chain is Phosphomethylpyrimidine synthase from Sphingopyxis alaskensis (strain DSM 13593 / LMG 18877 / RB2256) (Sphingomonas alaskensis).